We begin with the raw amino-acid sequence, 103 residues long: Small ribosomal subunit protein uS14c (103 aa).

The interval 27–56 is disordered; that stretch reads SKKKIRSKVSPLSLSEKTKMQEKLQSLPRN.

Belongs to the universal ribosomal protein uS14 family. Part of the 30S ribosomal subunit.

Its subcellular location is the plastid. It is found in the chloroplast. Its function is as follows. Binds 16S rRNA, required for the assembly of 30S particles. This Zea mays (Maize) protein is Small ribosomal subunit protein uS14c.